A 551-amino-acid polypeptide reads, in one-letter code: Probable NADH-ubiquinone oxidoreductase C947.15c, mitochondrial (551 aa).

Residues 1-35 (MSVSKARLQSVVRLSRTVPYSKTMVRSFHVSCAVK) constitute a mitochondrion transit peptide. An FAD-binding site is contributed by 92–122 (NIVVLGSGWGAVAAIKNLDPSLYNITLVSPR). 255–291 (LHITVVGGGPTGMEFAAEMQDFIDNDVKDMFPELQKD) is a binding site for NAD(+).

Belongs to the NADH dehydrogenase family.

The protein resides in the mitochondrion. The catalysed reaction is a quinone + NADH + H(+) = a quinol + NAD(+). It carries out the reaction a ubiquinone + NADH + H(+) = a ubiquinol + NAD(+). Its function is as follows. Catalyzes the oxidation of NADH. The protein is Probable NADH-ubiquinone oxidoreductase C947.15c, mitochondrial of Schizosaccharomyces pombe (strain 972 / ATCC 24843) (Fission yeast).